A 198-amino-acid polypeptide reads, in one-letter code: FMN-dependent NADH:quinone oxidoreductase (198 aa).

FMN contacts are provided by residues Ser10, 16–18, 94–97, and 138–141; these read SQS, MYNF, and TRGG.

It belongs to the azoreductase type 1 family. Homodimer. It depends on FMN as a cofactor.

The catalysed reaction is 2 a quinone + NADH + H(+) = 2 a 1,4-benzosemiquinone + NAD(+). It catalyses the reaction N,N-dimethyl-1,4-phenylenediamine + anthranilate + 2 NAD(+) = 2-(4-dimethylaminophenyl)diazenylbenzoate + 2 NADH + 2 H(+). Quinone reductase that provides resistance to thiol-specific stress caused by electrophilic quinones. Functionally, also exhibits azoreductase activity. Catalyzes the reductive cleavage of the azo bond in aromatic azo compounds to the corresponding amines. The polypeptide is FMN-dependent NADH:quinone oxidoreductase (Shewanella baltica (strain OS185)).